We begin with the raw amino-acid sequence, 294 residues long: Probable metallo-hydrolase BURPS1710b_2304 (294 aa).

Positions 68, 70, 72, 73, 143, 170, and 212 each coordinate a divalent metal cation.

It belongs to the metallo-beta-lactamase superfamily. Requires a divalent metal cation as cofactor.

In terms of biological role, probable hydrolase. Does not have beta-lactamase activity. This Burkholderia pseudomallei (strain 1710b) protein is Probable metallo-hydrolase BURPS1710b_2304.